We begin with the raw amino-acid sequence, 97 residues long: Protein RESPONSE TO LOW SULFUR 3 (97 aa).

A coiled-coil region spans residues 8 to 42 (VTVAAEEVEELRRRNGELEREMEEMKKEMVQLWRR).

This is Protein RESPONSE TO LOW SULFUR 3 from Arabidopsis thaliana (Mouse-ear cress).